The chain runs to 410 residues: Squalene synthase 1 (410 aa).

G2 carries the post-translational modification N-acetylglycine. The next 2 membrane-spanning stretches (helical) occupy residues 283–303 and 387–407; these read SIFR…ALCY and QPNS…FAYL.

The protein belongs to the phytoene/squalene synthase family. The cofactor is Mg(2+). Requires Mn(2+) as cofactor. As to expression, expressed in all tissues analyzed (seedlings, cotyledons, inflorescences, siliques, leaves, stems and roots). Highly expressed in roots and pollen.

It is found in the endoplasmic reticulum membrane. It carries out the reaction 2 (2E,6E)-farnesyl diphosphate + NADPH + H(+) = squalene + 2 diphosphate + NADP(+). It catalyses the reaction 2 (2E,6E)-farnesyl diphosphate + NADH + H(+) = squalene + 2 diphosphate + NAD(+). It functions in the pathway terpene metabolism; lanosterol biosynthesis; lanosterol from farnesyl diphosphate: step 1/3. The protein is Squalene synthase 1 of Arabidopsis thaliana (Mouse-ear cress).